A 103-amino-acid chain; its full sequence is MSVQGIEGVLQQLQVTALQASGSAKTLPAEAGFASELKAAIGKISENQQVARTSAQNFELGVPGVGLNDVMVNAQKSSVSLQLGIQVRNKLVAAYQEVMNMGV.

The protein belongs to the FliE family.

The protein localises to the bacterial flagellum basal body. In Yersinia pestis, this protein is Flagellar hook-basal body complex protein FliE.